Reading from the N-terminus, the 205-residue chain is Guanylate kinase (205 aa).

The region spanning 5-184 (GLLIVLSGPS…AVQKIKGIVE (180 aa)) is the Guanylate kinase-like domain. An ATP-binding site is contributed by 12–19 (GPSGVGKG).

Belongs to the guanylate kinase family.

The protein localises to the cytoplasm. The catalysed reaction is GMP + ATP = GDP + ADP. Essential for recycling GMP and indirectly, cGMP. In Listeria monocytogenes serotype 4b (strain F2365), this protein is Guanylate kinase.